The primary structure comprises 808 residues: Transducin beta-like protein 3 (808 aa).

Alanine 2 is modified (N-acetylalanine). WD repeat units follow at residues 64–105, 107–146, 149–190, 193–232, 245–284, 290–329, 332–372, 374–413, 419–459, 477–516, 519–560, 562–602, and 604–642; these read EDQE…RLWK, IHTAPVATMAFDPTSTLLATGGCDGAVRVWDIVRHYGTHH, GSPG…CLAV, AHYSAVTSLAFSADGHTMLSSGRDKICIIWDLQSCQATRT, LPEEPVSQLGVKSPGLYFLTAGDQGTLRVWEAASGQCVYT, GPGQELTHCTLAHTAGVVLTATADHNLLLYEARSLRLQKQ, GYSE…CQIL, GHTDIVLALDVFRKGWLFASCAKDQSVRIWRMNKAGQVMC, GHTH…LSKN, CHDKDINSVAIAPNDKLLATGSQDRTAKLWALPQCQLLGV, GHRR…KTFE, HDAS…RTLD, and HEDKVWGLHCSRLDDHALTGASDSRVILWKDVTEAEQAE. At serine 257 the chain carries Phosphoserine. Residue lysine 407 forms a Glycyl lysine isopeptide (Lys-Gly) (interchain with G-Cter in SUMO2) linkage.

As to quaternary structure, part of the small subunit (SSU) processome, composed of more than 70 proteins and the RNA chaperone small nucleolar RNA (snoRNA) U3.

It is found in the nucleus. The protein localises to the nucleolus. Part of the small subunit (SSU) processome, first precursor of the small eukaryotic ribosomal subunit. During the assembly of the SSU processome in the nucleolus, many ribosome biogenesis factors, an RNA chaperone and ribosomal proteins associate with the nascent pre-rRNA and work in concert to generate RNA folding, modifications, rearrangements and cleavage as well as targeted degradation of pre-ribosomal RNA by the RNA exosome. This Homo sapiens (Human) protein is Transducin beta-like protein 3.